Here is a 538-residue protein sequence, read N- to C-terminus: MRTKYIFITGGVLSSLGKGLAAASIAAVLECRGLRVTNQKLDPYINVDPGTMSPFQHGEVFVTDDGAETDLDLGHYERFTSTRMGKSNNLTTGQVYFSVITKERRGDYLGKTVQVIPHITNEIKDYIRQSSEGFDVALIEIGGTVGDIESLPFLEAIRQFRNEVGKQNAIFIHLTWVPFIKTAGEVKTKPTQHSVKALREIGIQPDILLCRTEEFLSEDIKAKIALFCNVEEAAVFTAKDVSCIYEVPLIYHREGLDQKIVDLLNIWTGQPHLEAWENVVQKITSPSYEVNIAIVGKYVNLTDSYKSLNEALVHGGIGNDCQVNLRFVDSEKIEKDGLNHQLENVDGILVPGGFGNRGIEGMIQVIRYARENKVPFFGICLGMQMAVVEFARHVCGLEKANSSEFDENTPHPVIDLLPEQKAVQEMGASMRLGSYPCRLSDASLACEAYGEVEIGERHRHRYEFNRDYQERLEACGLRITGRSPDGRLVEIVEIKDHPWFLGCQFHPEFKSRPTEPHPLFQRFIEAALRYRKKRAEDQ.

The amidoligase domain stretch occupies residues 1–266 (MRTKYIFITG…DQKIVDLLNI (266 aa)). Ser-14 is a CTP binding site. Position 14 (Ser-14) interacts with UTP. Residues 15–20 (SLGKGL) and Asp-72 contribute to the ATP site. Mg(2+)-binding residues include Asp-72 and Glu-140. CTP contacts are provided by residues 147 to 149 (DIE), 187 to 192 (KTKPTQ), and Lys-223. UTP contacts are provided by residues 187–192 (KTKPTQ) and Lys-223. Residue 239 to 241 (KDV) participates in ATP binding. The Glutamine amidotransferase type-1 domain occupies 291 to 533 (NIAIVGKYVN…IEAALRYRKK (243 aa)). Residue Gly-353 coordinates L-glutamine. Cys-380 serves as the catalytic Nucleophile; for glutamine hydrolysis. Residues 381 to 384 (LGMQ), Glu-404, and Arg-461 contribute to the L-glutamine site. Active-site residues include His-506 and Glu-508.

This sequence belongs to the CTP synthase family. As to quaternary structure, homotetramer.

It carries out the reaction UTP + L-glutamine + ATP + H2O = CTP + L-glutamate + ADP + phosphate + 2 H(+). The enzyme catalyses L-glutamine + H2O = L-glutamate + NH4(+). It catalyses the reaction UTP + NH4(+) + ATP = CTP + ADP + phosphate + 2 H(+). Its pathway is pyrimidine metabolism; CTP biosynthesis via de novo pathway; CTP from UDP: step 2/2. Allosterically activated by GTP, when glutamine is the substrate; GTP has no effect on the reaction when ammonia is the substrate. The allosteric effector GTP functions by stabilizing the protein conformation that binds the tetrahedral intermediate(s) formed during glutamine hydrolysis. Inhibited by the product CTP, via allosteric rather than competitive inhibition. In terms of biological role, catalyzes the ATP-dependent amination of UTP to CTP with either L-glutamine or ammonia as the source of nitrogen. Regulates intracellular CTP levels through interactions with the four ribonucleotide triphosphates. The polypeptide is CTP synthase (Syntrophus aciditrophicus (strain SB)).